The sequence spans 460 residues: ATP synthase subunit beta (460 aa).

ATP is bound at residue G150–T157.

Belongs to the ATPase alpha/beta chains family. F-type ATPases have 2 components, CF(1) - the catalytic core - and CF(0) - the membrane proton channel. CF(1) has five subunits: alpha(3), beta(3), gamma(1), delta(1), epsilon(1). CF(0) has three main subunits: a(1), b(2) and c(9-12). The alpha and beta chains form an alternating ring which encloses part of the gamma chain. CF(1) is attached to CF(0) by a central stalk formed by the gamma and epsilon chains, while a peripheral stalk is formed by the delta and b chains.

Its subcellular location is the cell inner membrane. The enzyme catalyses ATP + H2O + 4 H(+)(in) = ADP + phosphate + 5 H(+)(out). Functionally, produces ATP from ADP in the presence of a proton gradient across the membrane. The catalytic sites are hosted primarily by the beta subunits. The sequence is that of ATP synthase subunit beta from Edwardsiella ictaluri (strain 93-146).